A 278-amino-acid chain; its full sequence is Thioredoxin-related transmembrane protein 1 (278 aa).

An N-terminal signal peptide occupies residues 1–26; the sequence is MAHLGRLMVPLAALVLLLWAVPGAHG. Residues 27-132 enclose the Thioredoxin domain; sequence RRNNVRVLTD…FINFVSDKEW (106 aa). At 27–181 the chain is on the extracellular side; that stretch reads RRNNVRVLTD…DLGIPAWGSY (155 aa). Residues cysteine 56 and cysteine 59 each act as nucleophile in the active site. Cysteine 56 and cysteine 59 are oxidised to a cystine. Residues 182–202 traverse the membrane as a helical segment; that stretch reads LVFAFATVLSGLLLGLCMIFV. The Cytoplasmic segment spans residues 203 to 278; sequence ADCLCPSKRR…VGLPSATDTS (76 aa). S-palmitoyl cysteine attachment occurs at residues cysteine 205 and cysteine 207. The span at 217-226 shows a compositional bias: polar residues; sequence QYAKKTSPEF. Positions 217–278 are disordered; it reads QYAKKTSPEF…VGLPSATDTS (62 aa). Acidic residues predominate over residues 235 to 251; it reads EEQEADEEDVSEEEAED. Phosphoserine is present on residues serine 245 and serine 278.

In terms of assembly, interacts with ATP2A2. Post-translationally, palmitoylated; palmitoylation is required for localization to mitochondria-associated endoplasmic reticulum membrane (MAM).

It is found in the endoplasmic reticulum membrane. The protein resides in the mitochondrion membrane. It localises to the secreted. The enzyme catalyses Catalyzes the rearrangement of -S-S- bonds in proteins.. Thiredoxin domain-containing protein that participates in various redox reactions through the reversible oxidation of its active center dithiol to a disulfide and catalyze dithiol-disulfide exchange reactions. Acts as a key inhibitor of the alternative triglyceride biosynthesis pathway by inhibiting the activity of TMEM68/DIESL at the endoplasmic reticulum, thereby restricting accumulation of triacylglycerol. The alternative triglyceride biosynthesis pathway mediates formation of triacylglycerol from diacylglycerol and membrane phospholipids. Acts as a protein disulfide isomerase by catalyzing formation or reduction of disulfide bonds. Specifically mediates formation of disulfide bonds of transmembrane proteins at the endoplasmic reticulum membrane. Involved in ER-associated degradation (ERAD) via its protein disulfide isomerase activity by acting on folding-defective polypeptides at the endoplasmic reticulum membrane. Acts as a negative regulator of platelet aggregation following secretion in the extracellular space. Acts as a regulator of endoplasmic reticulum-mitochondria contact sites via its ability to regulate redox signals. Regulates endoplasmic reticulum-mitochondria Ca(2+) flux. The polypeptide is Thioredoxin-related transmembrane protein 1 (Mus musculus (Mouse)).